Consider the following 408-residue polypeptide: Tryptophan--tRNA ligase, chloroplastic/mitochondrial (408 aa).

A chloroplast and mitochondrion-targeting transit peptide spans Met-1–Cys-52. At Ser-53 the chain carries N-acetylserine. ATP is bound by residues Gln-72 and His-78–Asn-81. The 'HIGH' region signature appears at Pro-73 to Asn-81. Asp-197 provides a ligand contact to L-tryptophan. ATP is bound by residues Gly-209 to Asp-211, Val-260, Lys-269 to Ser-273, and Lys-272. The 'KMSKS' region signature appears at Lys-269 to Ser-273.

It belongs to the class-I aminoacyl-tRNA synthetase family.

The protein resides in the plastid. The protein localises to the chloroplast. It localises to the mitochondrion. It carries out the reaction tRNA(Trp) + L-tryptophan + ATP = L-tryptophyl-tRNA(Trp) + AMP + diphosphate + H(+). This is Tryptophan--tRNA ligase, chloroplastic/mitochondrial from Arabidopsis thaliana (Mouse-ear cress).